Consider the following 763-residue polypeptide: Phosphoglycerol transferase I (763 aa).

4 consecutive transmembrane segments (helical) span residues 1–21 (MSEL…AWKA), 26–46 (WWFA…ITLF), 77–97 (ILPG…LGWI), and 108–128 (FGYS…SPAF).

The protein belongs to the OpgB family.

Its subcellular location is the cell inner membrane. The catalysed reaction is a phosphatidylglycerol + a membrane-derived-oligosaccharide D-glucose = a 1,2-diacyl-sn-glycerol + a membrane-derived-oligosaccharide 6-(glycerophospho)-D-glucose.. It participates in glycan metabolism; osmoregulated periplasmic glucan (OPG) biosynthesis. In terms of biological role, transfers a phosphoglycerol residue from phosphatidylglycerol to the membrane-bound nascent glucan backbones. In Shigella boydii serotype 18 (strain CDC 3083-94 / BS512), this protein is Phosphoglycerol transferase I.